Reading from the N-terminus, the 549-residue chain is Ribosomal protein S6 kinase-like 1 (549 aa).

The MIT domain occupies 87–115; it reads IHVDPNKERREAVKLKITKYLRRAEEIFN. The Protein kinase domain occupies 145–539; it reads SAVEQLRGCR…VSKLKSHPFF (395 aa). ATP is bound by residues 151-159 and K177; that span reads RGCRVVGVI. The tract at residues 260–325 is disordered; that stretch reads LTPARLPSGH…SDLPKAPGGH (66 aa). Residue D412 is the Proton acceptor of the active site.

This sequence belongs to the protein kinase superfamily. Ser/Thr protein kinase family. S6 kinase subfamily.

The catalysed reaction is L-seryl-[protein] + ATP = O-phospho-L-seryl-[protein] + ADP + H(+). The enzyme catalyses L-threonyl-[protein] + ATP = O-phospho-L-threonyl-[protein] + ADP + H(+). This Pongo abelii (Sumatran orangutan) protein is Ribosomal protein S6 kinase-like 1 (RPS6KL1).